Here is a 219-residue protein sequence, read N- to C-terminus: Ribose-5-phosphate isomerase A (219 aa).

Residues 28–31 (TGST), 81–84 (DGAD), and 94–97 (KGGG) contribute to the substrate site. E103 serves as the catalytic Proton acceptor. K121 serves as a coordination point for substrate.

This sequence belongs to the ribose 5-phosphate isomerase family. As to quaternary structure, homodimer.

The enzyme catalyses aldehydo-D-ribose 5-phosphate = D-ribulose 5-phosphate. It participates in carbohydrate degradation; pentose phosphate pathway; D-ribose 5-phosphate from D-ribulose 5-phosphate (non-oxidative stage): step 1/1. In terms of biological role, catalyzes the reversible conversion of ribose-5-phosphate to ribulose 5-phosphate. The chain is Ribose-5-phosphate isomerase A from Erwinia tasmaniensis (strain DSM 17950 / CFBP 7177 / CIP 109463 / NCPPB 4357 / Et1/99).